The following is a 310-amino-acid chain: Malate dehydrogenase (310 aa).

Residues 7–12 (GAGNVG) and D32 each bind NAD(+). Substrate is bound by residues R81 and R87. NAD(+)-binding positions include N94 and 117–119 (VSN). Residues N119 and R150 each contribute to the substrate site. The active-site Proton acceptor is the H174.

It belongs to the LDH/MDH superfamily. MDH type 3 family.

It carries out the reaction (S)-malate + NAD(+) = oxaloacetate + NADH + H(+). Its function is as follows. Catalyzes the reversible oxidation of malate to oxaloacetate. This chain is Malate dehydrogenase, found in Chlorobium phaeobacteroides (strain DSM 266 / SMG 266 / 2430).